The sequence spans 198 residues: Small ribosomal subunit protein uS7 (198 aa).

This sequence belongs to the universal ribosomal protein uS7 family. Part of the 30S ribosomal subunit.

Functionally, one of the primary rRNA binding proteins, it binds directly to 16S rRNA where it nucleates assembly of the head domain of the 30S subunit. Is located at the subunit interface close to the decoding center. In Nanoarchaeum equitans (strain Kin4-M), this protein is Small ribosomal subunit protein uS7.